Here is a 689-residue protein sequence, read N- to C-terminus: Elongation factor G (689 aa).

Residues 8-282 enclose the tr-type G domain; that stretch reads LNTRNIGIMA…AVVDYLPSPL (275 aa). GTP-binding positions include 17–24, 81–85, and 135–138; these read AHIDAGKT, DTPGH, and NKMD.

This sequence belongs to the TRAFAC class translation factor GTPase superfamily. Classic translation factor GTPase family. EF-G/EF-2 subfamily.

Its subcellular location is the cytoplasm. Its function is as follows. Catalyzes the GTP-dependent ribosomal translocation step during translation elongation. During this step, the ribosome changes from the pre-translocational (PRE) to the post-translocational (POST) state as the newly formed A-site-bound peptidyl-tRNA and P-site-bound deacylated tRNA move to the P and E sites, respectively. Catalyzes the coordinated movement of the two tRNA molecules, the mRNA and conformational changes in the ribosome. This chain is Elongation factor G, found in Mycoplasma mycoides subsp. mycoides SC (strain CCUG 32753 / NCTC 10114 / PG1).